Consider the following 522-residue polypeptide: Gypsy retrotransposon integrase-like protein 1 (522 aa).

The region spanning 135 to 292 (KVENPWSLVT…TPYFQMFSRN (158 aa)) is the Integrase catalytic domain.

This is Gypsy retrotransposon integrase-like protein 1 (GIN1) from Macaca fascicularis (Crab-eating macaque).